Here is a 199-residue protein sequence, read N- to C-terminus: dCTP deaminase, dUMP-forming (199 aa).

Residues 101–106 (KSSLGR), Asp119, 127–129 (TLE), Gln148, Tyr162, and Gln174 contribute to the dCTP site. Glu129 acts as the Proton donor/acceptor in catalysis. The segment at 163–199 (GSAAAGSKYQGQRGPTPSRSYLNFPLPSDAVDAVESR) is disordered. Over residues 171-183 (YQGQRGPTPSRSY) the composition is skewed to polar residues.

This sequence belongs to the dCTP deaminase family. In terms of assembly, homotrimer.

It catalyses the reaction dCTP + 2 H2O = dUMP + NH4(+) + diphosphate. It participates in pyrimidine metabolism; dUMP biosynthesis; dUMP from dCTP: step 1/1. In terms of biological role, bifunctional enzyme that catalyzes both the deamination of dCTP to dUTP and the hydrolysis of dUTP to dUMP without releasing the toxic dUTP intermediate. This Nocardia farcinica (strain IFM 10152) protein is dCTP deaminase, dUMP-forming.